Here is a 368-residue protein sequence, read N- to C-terminus: MSILEKVQPIETMLPERYYTMSTEDMEKRVREIKEKMGETLFIPGHHYQKDEVVQFSDAAGDSLQLAQVAASNKEAKYIVFCGVHFMAETADMLTTDEQVVILPDMRAGCSMADMADIEQTERAWEELTKLFGDTMIPLTYVNSTAAIKAFCGRNGGATVTSSNAKQMVSWAFTQKERLVFLPDQHLGRNTAYDLGIPLDKMAVWDPHTDSLEYDGDIEEIQVILWKGHCSVHQNFTVKNIENVRKNHPDMNIIVHPECCYEVVAASDYAGSTKYIIDMIESAPSGSKWAIGTEMNLVNRIIQQHPDKEIVSLNPFMCPCLTMNRIDLPHLLWALETIERGEEINVISVDKQVTEEAVLALNRMLERV.

Iminosuccinate contacts are provided by His46 and Ser63. Residue Cys110 coordinates [4Fe-4S] cluster. Iminosuccinate-binding positions include 141-143 and Ser162; that span reads YVN. Cys230 contacts [4Fe-4S] cluster. Residues 256–258 and Thr273 each bind iminosuccinate; that span reads HPE. Cys320 is a binding site for [4Fe-4S] cluster.

Belongs to the quinolinate synthase family. Type 3 subfamily. [4Fe-4S] cluster serves as cofactor.

It localises to the cytoplasm. The enzyme catalyses iminosuccinate + dihydroxyacetone phosphate = quinolinate + phosphate + 2 H2O + H(+). Its pathway is cofactor biosynthesis; NAD(+) biosynthesis; quinolinate from iminoaspartate: step 1/1. Catalyzes the condensation of iminoaspartate with dihydroxyacetone phosphate to form quinolinate. The polypeptide is Quinolinate synthase (Bacillus anthracis (strain A0248)).